Consider the following 30-residue polypeptide: Cliotide T6 (30 aa).

The segment at residues 1 to 30 (SIPCGESCVYIPCITTIVGCSCKDKVCYKN) is a cross-link (cyclopeptide (Ser-Asn)). 3 cysteine pairs are disulfide-bonded: C4–C20, C8–C22, and C13–C27.

In terms of processing, contains 3 disulfide bonds. This is a cyclic peptide. In terms of tissue distribution, expressed in pod but not in flower, stem, shoot, leaf, seed, root and nodule (at protein level).

In terms of biological role, probably participates in a plant defense mechanism. The chain is Cliotide T6 from Clitoria ternatea (Butterfly pea).